Reading from the N-terminus, the 307-residue chain is Mycothiol acetyltransferase (307 aa).

N-acetyltransferase domains lie at 15–158 (HTLD…LAEP) and 164–307 (VTVR…RTES). Glu46 is a 1D-myo-inositol 2-(L-cysteinylamino)-2-deoxy-alpha-D-glucopyranoside binding site. Acetyl-CoA is bound at residue 90–92 (LVV). 1D-myo-inositol 2-(L-cysteinylamino)-2-deoxy-alpha-D-glucopyranoside-binding residues include Glu191, Lys230, and Glu239. Acetyl-CoA-binding positions include 243 to 245 (VGV) and 250 to 256 (QGGGLGK). Tyr277 is a binding site for 1D-myo-inositol 2-(L-cysteinylamino)-2-deoxy-alpha-D-glucopyranoside.

This sequence belongs to the acetyltransferase family. MshD subfamily. As to quaternary structure, monomer.

The catalysed reaction is 1D-myo-inositol 2-(L-cysteinylamino)-2-deoxy-alpha-D-glucopyranoside + acetyl-CoA = mycothiol + CoA + H(+). Its function is as follows. Catalyzes the transfer of acetyl from acetyl-CoA to desacetylmycothiol (Cys-GlcN-Ins) to form mycothiol. This Streptomyces griseus subsp. griseus (strain JCM 4626 / CBS 651.72 / NBRC 13350 / KCC S-0626 / ISP 5235) protein is Mycothiol acetyltransferase.